We begin with the raw amino-acid sequence, 317 residues long: Uridine phosphorylase 2 (317 aa).

Residues Gly-66, Arg-100, and 144–147 (RIGT) each bind phosphate. A disulfide bridge connects residues Cys-95 and Cys-102. Uridine is bound by residues 148 to 149 (SG) and 223 to 225 (QGR).

Belongs to the PNP/UDP phosphorylase family. As to quaternary structure, homodimer. In terms of tissue distribution, predominantly expressed in kidney.

It catalyses the reaction uridine + phosphate = alpha-D-ribose 1-phosphate + uracil. The catalysed reaction is 2'-deoxyuridine + phosphate = 2-deoxy-alpha-D-ribose 1-phosphate + uracil. The protein operates within pyrimidine metabolism; UMP biosynthesis via salvage pathway; uracil from uridine (phosphorylase route): step 1/1. Its activity is regulated as follows. A conditional disulfide bridge can form within the protein that dislocates a critical phosphate-coordinating arginine Arg-100 away from the active site, disabling the enzyme. In terms of biological role, catalyzes the reversible phosphorylytic cleavage of uridine to uracil and ribose-1-phosphate which can then be utilized as carbon and energy sources or in the rescue of pyrimidine bases for nucleotide synthesis. Shows broad substrate specificity and can also accept deoxyuridine and other analogous compounds. The chain is Uridine phosphorylase 2 from Homo sapiens (Human).